Reading from the N-terminus, the 421-residue chain is Non-homologous end-joining factor LIF1 (421 aa).

Residues M1–L196 are interaction with NEJ1. The interval G365 to T421 is disordered. Positions A391–P409 are enriched in basic and acidic residues.

Belongs to the XRCC4-XLF family. XLF subfamily. As to quaternary structure, interacts with DNL4 (via BRCT domain). Interacts (via N-terminus) with NEJ1 (via C-terminus); the interaction is direct. The DNL4-LIF1 complex interacts with POL4.

Its subcellular location is the cytoplasm. It is found in the nucleus. Involved in non-homologous repair of DNA double-strand breaks. Stabilizes DNL4. The sequence is that of Non-homologous end-joining factor LIF1 (LIF1) from Saccharomyces cerevisiae (strain ATCC 204508 / S288c) (Baker's yeast).